Reading from the N-terminus, the 243-residue chain is 3-deoxy-manno-octulosonate cytidylyltransferase (243 aa).

It belongs to the KdsB family.

The protein resides in the cytoplasm. The enzyme catalyses 3-deoxy-alpha-D-manno-oct-2-ulosonate + CTP = CMP-3-deoxy-beta-D-manno-octulosonate + diphosphate. The protein operates within nucleotide-sugar biosynthesis; CMP-3-deoxy-D-manno-octulosonate biosynthesis; CMP-3-deoxy-D-manno-octulosonate from 3-deoxy-D-manno-octulosonate and CTP: step 1/1. It participates in bacterial outer membrane biogenesis; lipopolysaccharide biosynthesis. In terms of biological role, activates KDO (a required 8-carbon sugar) for incorporation into bacterial lipopolysaccharide in Gram-negative bacteria. This is 3-deoxy-manno-octulosonate cytidylyltransferase from Helicobacter acinonychis (strain Sheeba).